Consider the following 312-residue polypeptide: Ribosomal protein L11 methyltransferase (312 aa).

S-adenosyl-L-methionine is bound by residues threonine 160, glycine 181, aspartate 203, and asparagine 246.

It belongs to the methyltransferase superfamily. PrmA family.

Its subcellular location is the cytoplasm. It carries out the reaction L-lysyl-[protein] + 3 S-adenosyl-L-methionine = N(6),N(6),N(6)-trimethyl-L-lysyl-[protein] + 3 S-adenosyl-L-homocysteine + 3 H(+). Its function is as follows. Methylates ribosomal protein L11. In Staphylococcus aureus (strain MRSA252), this protein is Ribosomal protein L11 methyltransferase.